A 241-amino-acid chain; its full sequence is Lactate utilization protein C (241 aa).

It belongs to the LutC/YkgG family.

In terms of biological role, is involved in L-lactate degradation and allows cells to grow with lactate as the sole carbon source. The protein is Lactate utilization protein C of Bacillus velezensis (strain DSM 23117 / BGSC 10A6 / LMG 26770 / FZB42) (Bacillus amyloliquefaciens subsp. plantarum).